Reading from the N-terminus, the 160-residue chain is Cytochrome b6-f complex subunit 4 (160 aa).

The next 3 helical transmembrane spans lie at 36-56, 95-115, and 131-151; these read LLYIFPVVILGTIACNVGLAV, LLGVLLMVSVPTGLLTVPFLE, and TVFLIGTVVALWLGIGATLPI.

This sequence belongs to the cytochrome b family. PetD subfamily. As to quaternary structure, the 4 large subunits of the cytochrome b6-f complex are cytochrome b6, subunit IV (17 kDa polypeptide, petD), cytochrome f and the Rieske protein, while the 4 small subunits are petG, petL, petM and petN. The complex functions as a dimer.

It is found in the plastid. It localises to the chloroplast thylakoid membrane. Its function is as follows. Component of the cytochrome b6-f complex, which mediates electron transfer between photosystem II (PSII) and photosystem I (PSI), cyclic electron flow around PSI, and state transitions. The polypeptide is Cytochrome b6-f complex subunit 4 (Sorghum bicolor (Sorghum)).